A 509-amino-acid polypeptide reads, in one-letter code: MLTSDPSESTAHLQRTISNLSARNAKLAELLKASRDKLSILQDQLEDLAAPPSTYGTFLEFSGGRETAEVFTAGRHMRLRISPDVEKAELVPGVQVRLGEASQVVEVCDISTTGQLATLVELLADNRGLICDHTGEERVVKLAAALTEGVDKLPKAGDTLLVDPRAGYAFEVIPKTEVSTLALEEVPDVTYADIGGLNSQIELIHDAVELPFTQPDLYRAYDLKPPKGVLLYGPPGCGKTLIAKAVANSLAQRIGAGNRSYFINVKGPELLNKYVGETERRIRLIFERARELAEEGRPVIVFFDEMESIFRTRGSGVSSDMETTVVPQLLTELDGVESLSNVIIIGATNREELIDPAILRPGRLDVKIRVERPDKQAARDVFARHLKQNIPTAEPIDSLINNAVDHLYADNPYVELSLIDGSTEILHYRDFVSGAMIANIVDRAKKCAIKDHIAGRHSGVASEHLIAAINAENHESEDLPNTSNPDDWSRIIGRHGLRVAHARVLGGQR.

The stretch at 11–50 (AHLQRTISNLSARNAKLAELLKASRDKLSILQDQLEDLAA) forms a coiled coil. Residue 236–241 (GCGKTL) coordinates ATP.

This sequence belongs to the AAA ATPase family. In terms of assembly, homohexamer. Assembles into a hexameric ring structure.

The chain is AAA ATPase forming ring-shaped complexes from Corynebacterium diphtheriae (strain ATCC 700971 / NCTC 13129 / Biotype gravis).